Consider the following 302-residue polypeptide: Aspartate carbamoyltransferase catalytic subunit (302 aa).

Arginine 53 and threonine 54 together coordinate carbamoyl phosphate. Residue lysine 82 coordinates L-aspartate. Carbamoyl phosphate-binding residues include arginine 103, histidine 131, and glutamine 134. Positions 164 and 223 each coordinate L-aspartate. Leucine 260 and proline 261 together coordinate carbamoyl phosphate.

It belongs to the aspartate/ornithine carbamoyltransferase superfamily. ATCase family. In terms of assembly, heterooligomer of catalytic and regulatory chains.

The catalysed reaction is carbamoyl phosphate + L-aspartate = N-carbamoyl-L-aspartate + phosphate + H(+). Its pathway is pyrimidine metabolism; UMP biosynthesis via de novo pathway; (S)-dihydroorotate from bicarbonate: step 2/3. Functionally, catalyzes the condensation of carbamoyl phosphate and aspartate to form carbamoyl aspartate and inorganic phosphate, the committed step in the de novo pyrimidine nucleotide biosynthesis pathway. The sequence is that of Aspartate carbamoyltransferase catalytic subunit from Methanococcus vannielii (strain ATCC 35089 / DSM 1224 / JCM 13029 / OCM 148 / SB).